A 341-amino-acid chain; its full sequence is ATPase GET3 (341 aa).

34–41 (KGGVGKTT) contacts ATP. D63 is a catalytic residue. Residues E245 and N272 each contribute to the ATP site. The Zn(2+) site is built by C283 and C286.

Belongs to the arsA ATPase family. In terms of assembly, homodimer.

It is found in the cytoplasm. Its subcellular location is the endoplasmic reticulum. In terms of biological role, ATPase required for the post-translational delivery of tail-anchored (TA) proteins to the endoplasmic reticulum. Recognizes and selectively binds the transmembrane domain of TA proteins in the cytosol. This complex then targets to the endoplasmic reticulum by membrane-bound receptors, where the tail-anchored protein is released for insertion. This process is regulated by ATP binding and hydrolysis. ATP binding drives the homodimer towards the closed dimer state, facilitating recognition of newly synthesized TA membrane proteins. ATP hydrolysis is required for insertion. Subsequently, the homodimer reverts towards the open dimer state, lowering its affinity for the membrane-bound receptor, and returning it to the cytosol to initiate a new round of targeting. In Paracoccidioides lutzii (strain ATCC MYA-826 / Pb01) (Paracoccidioides brasiliensis), this protein is ATPase GET3.